The following is a 398-amino-acid chain: Alpha-monoglucosyldiacylglycerol synthase (398 aa).

It belongs to the glycosyltransferase group 1 family. Glycosyltransferase 4 subfamily. It depends on Mg(2+) as a cofactor.

It is found in the cell membrane. It catalyses the reaction a 1,2-diacyl-sn-glycerol + UDP-alpha-D-glucose = a 1,2-diacyl-3-O-(alpha-D-glucopyranosyl)-sn-glycerol + UDP + H(+). Its activity is regulated as follows. Activated by the negatively charged lipids phosphatidylglycerol (PG), cardiolipin (CL), dodecylphosphate-rac-glycerol (PDG), 1,2-dioleoyl-phosphatidylglycerol (DOPG) and phosphatidylserine (PS). Its function is as follows. Glucosyltransferase involved in the biosynthesis of the non-bilayer-prone membrane lipid alpha-monoglucosyldiacylglycerol. This is a major component for maintaining a certain anionic lipid surface charge density, for balancing the bilayer to non-bilayer phase equilibria and for keeping a constant lipid bilayer spontaneous curvature (curvature packing stress). Catalyzes the transfer of a glucosyl residue from UDP-Glc to diacylglycerol (DAG) acceptor to form the corresponding alpha-glucosyl-DAG (1,2-diacyl-3-O-(alpha-D-glucopyranosyl)-sn-glycerol). It can only use UDP-Glc as sugar donor and DAG is the preferred substrate. The sequence is that of Alpha-monoglucosyldiacylglycerol synthase (mgs) from Acholeplasma laidlawii.